We begin with the raw amino-acid sequence, 111 residues long: Probable 4-amino-4-deoxy-L-arabinose-phosphoundecaprenol flippase subunit ArnE (111 aa).

3 helical membrane passes run 36–56 (IVLW…LWLL), 61–81 (VPVG…TLAA), and 88–108 (PVSP…VILG). The EamA domain occupies 40–109 (LGLALACLGL…IIGGIVILGS (70 aa)).

It belongs to the ArnE family. In terms of assembly, heterodimer of ArnE and ArnF.

It is found in the cell inner membrane. The protein operates within bacterial outer membrane biogenesis; lipopolysaccharide biosynthesis. Functionally, translocates 4-amino-4-deoxy-L-arabinose-phosphoundecaprenol (alpha-L-Ara4N-phosphoundecaprenol) from the cytoplasmic to the periplasmic side of the inner membrane. The polypeptide is Probable 4-amino-4-deoxy-L-arabinose-phosphoundecaprenol flippase subunit ArnE (Shigella flexneri).